Here is a 541-residue protein sequence, read N- to C-terminus: Chaperonin GroEL (541 aa).

Residues 29–32 (TLGP), 86–90 (DGTTT), glycine 413, 477–479 (DAL), and aspartate 493 contribute to the ATP site.

This sequence belongs to the chaperonin (HSP60) family. In terms of assembly, forms a cylinder of 14 subunits composed of two heptameric rings stacked back-to-back. Interacts with the co-chaperonin GroES.

It localises to the cytoplasm. The enzyme catalyses ATP + H2O + a folded polypeptide = ADP + phosphate + an unfolded polypeptide.. In terms of biological role, together with its co-chaperonin GroES, plays an essential role in assisting protein folding. The GroEL-GroES system forms a nano-cage that allows encapsulation of the non-native substrate proteins and provides a physical environment optimized to promote and accelerate protein folding. This chain is Chaperonin GroEL, found in Clostridium botulinum (strain ATCC 19397 / Type A).